Consider the following 396-residue polypeptide: Purine ribonucleoside efflux pump NepI (396 aa).

Residues 1–21 (MSEFIAENRGADAITRPNWSA) are Cytoplasmic-facing. A helical transmembrane segment spans residues 22–42 (VFSVAFCVACLIIVEFLPVSL). The Periplasmic segment spans residues 43 to 54 (LTPMAQDLGISE). The helical transmembrane segment at 55-75 (GVAGQSVTVTAFVAMFASLFI) threads the bilayer. Residues 76–85 (TQTIQATDRR) are Cytoplasmic-facing. Residues 86 to 106 (YVVILFAVLLTLSCLLVSFAN) form a helical membrane-spanning segment. Residue S107 is a topological domain, periplasmic. A helical transmembrane segment spans residues 108–128 (FSLLLIGRACLGLALGGFWAM). The Cytoplasmic portion of the chain corresponds to 129 to 147 (SASLTMRLVPPRTVPKALS). A helical membrane pass occupies residues 148–168 (VIFGAVSIALVIAAPLGSFLG). The Periplasmic portion of the chain corresponds to 169 to 175 (ELIGWRN). Residues 176–196 (VFNAAAVMGVLCIFWIIKSLP) form a helical membrane-spanning segment. Over 197-215 (SLPGEPSHQKQNTFRLLQR) the chain is Cytoplasmic. The chain crosses the membrane as a helical span at residues 216 to 236 (PGVMAGMIAIFMSFAGQFAFF). The Periplasmic segment spans residues 237-255 (TYIRPVYMNLAGFGVDGLT). The helical transmembrane segment at 256 to 276 (LVLLSFGIASFIGTSLSSFIL) threads the bilayer. The Cytoplasmic portion of the chain corresponds to 277 to 281 (KRSVK). The chain crosses the membrane as a helical span at residues 282-302 (LALAGAPLILAVSALVLTLWG). At 303 to 305 (SDK) the chain is on the periplasmic side. The chain crosses the membrane as a helical span at residues 306 to 326 (IVATGVAIIWGLTFALVPVGW). The Cytoplasmic portion of the chain corresponds to 327 to 343 (STWITRSLADQAEKAGS). A helical membrane pass occupies residues 344-364 (IQVAVIQLANTCGAAIGGYAL). Topologically, residues 365–366 (DN) are periplasmic. A helical transmembrane segment spans residues 367–387 (IGLTSPLMLSGTLMLLTALLV). Residues 388-396 (TAKVKMKKS) lie on the Cytoplasmic side of the membrane.

This sequence belongs to the major facilitator superfamily. DHA1 family. NepI (TC 2.A.1.2.26) subfamily.

The protein resides in the cell inner membrane. It carries out the reaction inosine(in) + H(+)(out) = inosine(out) + H(+)(in). It catalyses the reaction guanosine(in) + H(+)(out) = guanosine(out) + H(+)(in). Involved in the efflux of purine ribonucleosides, such as inosine and guanosine. The polypeptide is Purine ribonucleoside efflux pump NepI (Shigella flexneri).